The chain runs to 233 residues: Methylthioribulose-1-phosphate dehydratase (233 aa).

Residue C91 coordinates substrate. H108 and H110 together coordinate Zn(2+). E137 serves as the catalytic Proton donor/acceptor. H194 contacts Zn(2+).

This sequence belongs to the aldolase class II family. MtnB subfamily. Zn(2+) serves as cofactor.

The protein localises to the cytoplasm. It catalyses the reaction 5-(methylsulfanyl)-D-ribulose 1-phosphate = 5-methylsulfanyl-2,3-dioxopentyl phosphate + H2O. It functions in the pathway amino-acid biosynthesis; L-methionine biosynthesis via salvage pathway; L-methionine from S-methyl-5-thio-alpha-D-ribose 1-phosphate: step 2/6. Functionally, catalyzes the dehydration of methylthioribulose-1-phosphate (MTRu-1-P) into 2,3-diketo-5-methylthiopentyl-1-phosphate (DK-MTP-1-P). This Phaeosphaeria nodorum (strain SN15 / ATCC MYA-4574 / FGSC 10173) (Glume blotch fungus) protein is Methylthioribulose-1-phosphate dehydratase.